Reading from the N-terminus, the 173-residue chain is Photosystem I assembly protein Ycf3 (173 aa).

3 TPR repeats span residues 35–68 (AFAY…EDDP), 72–105 (SYIL…NPRM), and 120–153 (GEKA…APNN).

It belongs to the Ycf3 family.

It localises to the cellular thylakoid membrane. Functionally, essential for the assembly of the photosystem I (PSI) complex. May act as a chaperone-like factor to guide the assembly of the PSI subunits. The sequence is that of Photosystem I assembly protein Ycf3 from Trichodesmium erythraeum (strain IMS101).